A 21-amino-acid polypeptide reads, in one-letter code: Brevinin-1OKb (21 aa).

Lysine 21 is subject to Lysine amide.

Expressed by the skin glands.

It localises to the secreted. In terms of biological role, antimicrobial peptide. The protein is Brevinin-1OKb of Nidirana okinavana (Kampira Falls frog).